The following is a 380-amino-acid chain: Lipid-A-disaccharide synthase (380 aa).

The protein belongs to the LpxB family.

It catalyses the reaction a lipid X + a UDP-2-N,3-O-bis[(3R)-3-hydroxyacyl]-alpha-D-glucosamine = a lipid A disaccharide + UDP + H(+). It participates in bacterial outer membrane biogenesis; LPS lipid A biosynthesis. Condensation of UDP-2,3-diacylglucosamine and 2,3-diacylglucosamine-1-phosphate to form lipid A disaccharide, a precursor of lipid A, a phosphorylated glycolipid that anchors the lipopolysaccharide to the outer membrane of the cell. The polypeptide is Lipid-A-disaccharide synthase (Vibrio vulnificus (strain CMCP6)).